We begin with the raw amino-acid sequence, 388 residues long: Chorismate synthase (388 aa).

Residues Arg39 and Arg45 each coordinate NADP(+). FMN contacts are provided by residues 132–134, 251–252, Gly296, 311–315, and Arg337; these read RSS, NA, and KPIPT.

It belongs to the chorismate synthase family. As to quaternary structure, homotetramer. FMNH2 serves as cofactor.

The catalysed reaction is 5-O-(1-carboxyvinyl)-3-phosphoshikimate = chorismate + phosphate. Its pathway is metabolic intermediate biosynthesis; chorismate biosynthesis; chorismate from D-erythrose 4-phosphate and phosphoenolpyruvate: step 7/7. Its function is as follows. Catalyzes the anti-1,4-elimination of the C-3 phosphate and the C-6 proR hydrogen from 5-enolpyruvylshikimate-3-phosphate (EPSP) to yield chorismate, which is the branch point compound that serves as the starting substrate for the three terminal pathways of aromatic amino acid biosynthesis. This reaction introduces a second double bond into the aromatic ring system. This is Chorismate synthase from Staphylococcus haemolyticus (strain JCSC1435).